The following is a 461-amino-acid chain: Fumarate hydratase class II (461 aa).

Residues 97–99 (SGT), 127–130 (HPND), 137–139 (SSN), and T185 each bind substrate. The active-site Proton donor/acceptor is H186. Residue S316 is part of the active site. Residues S317 and 322–324 (KVN) contribute to the substrate site.

This sequence belongs to the class-II fumarase/aspartase family. Fumarase subfamily. In terms of assembly, homotetramer.

It is found in the cytoplasm. It catalyses the reaction (S)-malate = fumarate + H2O. It functions in the pathway carbohydrate metabolism; tricarboxylic acid cycle; (S)-malate from fumarate: step 1/1. Involved in the TCA cycle. Catalyzes the stereospecific interconversion of fumarate to L-malate. This chain is Fumarate hydratase class II, found in Staphylococcus aureus (strain Mu50 / ATCC 700699).